A 372-amino-acid chain; its full sequence is Chaperone protein DnaJ (372 aa).

One can recognise a J domain in the interval 5–70; that stretch reads SYYDILGVSK…KKRQAYDQFG (66 aa). The CR-type zinc finger occupies 140–218; that stretch reads GREYKIEIPR…CGGQGLQEKR (79 aa). Zn(2+)-binding residues include C153, C156, C170, C173, C192, C195, C206, and C209. 4 CXXCXGXG motif repeats span residues 153–160, 170–177, 192–199, and 206–213; these read CVDCNGSG, CPDCGGSG, CPTCRGKG, and CRSCGGQG.

Belongs to the DnaJ family. In terms of assembly, homodimer. Requires Zn(2+) as cofactor.

It localises to the cytoplasm. Its function is as follows. Participates actively in the response to hyperosmotic and heat shock by preventing the aggregation of stress-denatured proteins and by disaggregating proteins, also in an autonomous, DnaK-independent fashion. Unfolded proteins bind initially to DnaJ; upon interaction with the DnaJ-bound protein, DnaK hydrolyzes its bound ATP, resulting in the formation of a stable complex. GrpE releases ADP from DnaK; ATP binding to DnaK triggers the release of the substrate protein, thus completing the reaction cycle. Several rounds of ATP-dependent interactions between DnaJ, DnaK and GrpE are required for fully efficient folding. Also involved, together with DnaK and GrpE, in the DNA replication of plasmids through activation of initiation proteins. This chain is Chaperone protein DnaJ, found in Leptospira interrogans serogroup Icterohaemorrhagiae serovar copenhageni (strain Fiocruz L1-130).